The chain runs to 319 residues: Transcription elongation factor A protein 1 (319 aa).

The region spanning 1-78 is the TFIIS N-terminal domain; that stretch reads MQEIIKCREQ…DKWKQDIEGT (78 aa). A compositionally biased stretch (low complexity) spans 78-106; the sequence is TSATTTSSSSSSSSSTTSTTTTKTASPSE. The interval 78–146 is disordered; that stretch reads TSATTTSSSS…TTPKTSSPPI (69 aa). A compositionally biased stretch (basic and acidic residues) spans 107–122; it reads SLKRKSISEDTSDRPT. Low complexity predominate over residues 133–146; it reads ISPPTTPKTSSPPI. A TFIIS central domain is found at 160-272; sequence LRNKTIQLFV…ASMLGQNNEA (113 aa). The TFIIS-type zinc finger occupies 275-317; that stretch reads DQFQCGKCKQRKCTYTQLQTRSADEPPTTFVKCCVKGCGNRWR. Positions 279, 282, 307, and 312 each coordinate Zn(2+).

Belongs to the TFS-II family.

The protein resides in the nucleus. Functionally, necessary for efficient RNA polymerase II transcription elongation past template-encoded arresting sites. The arresting sites in DNA have the property of trapping a certain fraction of elongating RNA polymerases that pass through, resulting in locked ternary complexes. Cleavage of the nascent transcript by S-II allows the resumption of elongation from the new 3'-terminus. The chain is Transcription elongation factor A protein 1 (tcea1) from Dictyostelium discoideum (Social amoeba).